The following is a 248-amino-acid chain: 2,3-bisphosphoglycerate-dependent phosphoglycerate mutase (248 aa).

Residues 8–15, 21–22, arginine 60, 87–90, lysine 98, 114–115, and 183–184 contribute to the substrate site; these read RHGESQWN, TG, ERHY, RR, and GN. The Tele-phosphohistidine intermediate role is filled by histidine 9. Catalysis depends on glutamate 87, which acts as the Proton donor/acceptor.

This sequence belongs to the phosphoglycerate mutase family. BPG-dependent PGAM subfamily. Homodimer.

The enzyme catalyses (2R)-2-phosphoglycerate = (2R)-3-phosphoglycerate. Its pathway is carbohydrate degradation; glycolysis; pyruvate from D-glyceraldehyde 3-phosphate: step 3/5. Its function is as follows. Catalyzes the interconversion of 2-phosphoglycerate and 3-phosphoglycerate. The polypeptide is 2,3-bisphosphoglycerate-dependent phosphoglycerate mutase (Teredinibacter turnerae (strain ATCC 39867 / T7901)).